A 468-amino-acid chain; its full sequence is Proline--tRNA ligase (468 aa).

It belongs to the class-II aminoacyl-tRNA synthetase family. ProS type 3 subfamily. Homodimer.

It localises to the cytoplasm. It carries out the reaction tRNA(Pro) + L-proline + ATP = L-prolyl-tRNA(Pro) + AMP + diphosphate. Functionally, catalyzes the attachment of proline to tRNA(Pro) in a two-step reaction: proline is first activated by ATP to form Pro-AMP and then transferred to the acceptor end of tRNA(Pro). The sequence is that of Proline--tRNA ligase from Frankia alni (strain DSM 45986 / CECT 9034 / ACN14a).